A 442-amino-acid polypeptide reads, in one-letter code: Mitochondrial distribution and morphology protein 12 (442 aa).

An SMP-LTD domain is found at 1 to 442 (MSIDINWEAA…VYPSFWTFLV (442 aa)). Disordered stretches follow at residues 67-125 (NDFY…RVGY), 202-277 (LSLA…RRMR), and 364-387 (EGYH…RRSN). The span at 69–80 (FYEEDEDGEDLS) shows a compositional bias: acidic residues. Residues 90 to 100 (PSSQGLSQSTP) show a composition bias toward polar residues. Residues 101–112 (NGDAGSSNSSSN) are compositionally biased toward low complexity. Residues 213–222 (RQRERARSSD) are compositionally biased toward basic and acidic residues. Low complexity predominate over residues 227–245 (SPQSRSRPSTSSTRQRTST).

The protein belongs to the MDM12 family. In terms of assembly, component of the ER-mitochondria encounter structure (ERMES) or MDM complex, composed of MMM1, MDM10, MDM12 and MDM34. An MMM1 homodimer associates with one molecule of MDM12 on each side in a pairwise head-to-tail manner, and the SMP-LTD domains of MMM1 and MDM12 generate a continuous hydrophobic tunnel for phospholipid trafficking.

It is found in the mitochondrion outer membrane. The protein resides in the endoplasmic reticulum membrane. In terms of biological role, component of the ERMES/MDM complex, which serves as a molecular tether to connect the endoplasmic reticulum (ER) and mitochondria. Components of this complex are involved in the control of mitochondrial shape and protein biogenesis, and function in nonvesicular lipid trafficking between the ER and mitochondria. MDM12 is required for the interaction of the ER-resident membrane protein MMM1 and the outer mitochondrial membrane-resident beta-barrel protein MDM10. The MDM12-MMM1 subcomplex functions in the major beta-barrel assembly pathway that is responsible for biogenesis of all mitochondrial outer membrane beta-barrel proteins, and acts in a late step after the SAM complex. The MDM10-MDM12-MMM1 subcomplex further acts in the TOM40-specific pathway after the action of the MDM12-MMM1 complex. Essential for establishing and maintaining the structure of mitochondria and maintenance of mtDNA nucleoids. The protein is Mitochondrial distribution and morphology protein 12 of Arthroderma otae (strain ATCC MYA-4605 / CBS 113480) (Microsporum canis).